The chain runs to 565 residues: SRSF protein kinase 3 (565 aa).

The tract at residues 1 to 44 (MSANAGGSGSVDCGGSSSSSQTSCGPESSGSELTPATPAPRLLQ) is disordered. The span at 10–31 (SVDCGGSSSSSQTSCGPESSGS) shows a compositional bias: low complexity. S49 carries the post-translational modification Phosphoserine. Positions 78–563 (YHVVRKLGWG…AADCLQHPWL (486 aa)) constitute a Protein kinase domain. ATP-binding positions include 84-92 (LGWGHFSTV) and K107. Residue D211 is the Proton acceptor of the active site. A compositionally biased stretch (polar residues) spans 236–253 (WQQSGAQPPSRSTVSTAP). Disordered stretches follow at residues 236–280 (WQQS…KRLL) and 295–350 (AAVQ…QTSG). The segment covering 262 to 277 (SKNKRKKMRRKRKQQK) has biased composition (basic residues). Residues 325–350 (AGPSPASSSPVPGGERSLSPSSQTSG) show a composition bias toward low complexity. The residue at position 328 (S328) is a Phosphoserine.

It belongs to the protein kinase superfamily. CMGC Ser/Thr protein kinase family. As to expression, exclusively expressed in skeletal and heart muscle.

It is found in the nucleus. The protein resides in the cytoplasm. The enzyme catalyses L-seryl-[protein] + ATP = O-phospho-L-seryl-[protein] + ADP + H(+). The catalysed reaction is L-threonyl-[protein] + ATP = O-phospho-L-threonyl-[protein] + ADP + H(+). In terms of biological role, serine/arginine-rich protein-specific kinase which specifically phosphorylates its substrates at serine residues located in regions rich in arginine/serine dipeptides, known as RS domains. Phosphorylates the SR splicing factor SRSF1 and the lamin-B receptor (LBR) in vitro. Required for normal muscle development. The protein is SRSF protein kinase 3 (Srpk3) of Mus musculus (Mouse).